Here is a 466-residue protein sequence, read N- to C-terminus: Light-independent protochlorophyllide reductase subunit N (466 aa).

3 residues coordinate [4Fe-4S] cluster: Cys23, Cys48, and Cys108.

It belongs to the BchN/ChlN family. Protochlorophyllide reductase is composed of three subunits; ChlL, ChlN and ChlB. Forms a heterotetramer of two ChlB and two ChlN subunits. The cofactor is [4Fe-4S] cluster.

It catalyses the reaction chlorophyllide a + oxidized 2[4Fe-4S]-[ferredoxin] + 2 ADP + 2 phosphate = protochlorophyllide a + reduced 2[4Fe-4S]-[ferredoxin] + 2 ATP + 2 H2O. It functions in the pathway porphyrin-containing compound metabolism; chlorophyll biosynthesis (light-independent). Component of the dark-operative protochlorophyllide reductase (DPOR) that uses Mg-ATP and reduced ferredoxin to reduce ring D of protochlorophyllide (Pchlide) to form chlorophyllide a (Chlide). This reaction is light-independent. The NB-protein (ChlN-ChlB) is the catalytic component of the complex. This is Light-independent protochlorophyllide reductase subunit N from Synechococcus elongatus (strain ATCC 33912 / PCC 7942 / FACHB-805) (Anacystis nidulans R2).